The following is a 443-amino-acid chain: Clustered-asparagine-rich protein (443 aa).

Positions 16–106 (TKLHIQNIPP…RNIDAKFAVP (91 aa)) constitute an RRM 1 domain. A disordered region spans residues 253–279 (NHLNNNNNNINNNNNNNNNNNNNNNVM). The span at 256-277 (NNNNNNINNNNNNNNNNNNNNN) shows a compositional bias: low complexity. Residues 342–435 (SSITIMKKQN…KYLKVQLKKG (94 aa)) form the RRM 2 domain.

This chain is Clustered-asparagine-rich protein, found in Plasmodium falciparum.